Here is a 274-residue protein sequence, read N- to C-terminus: 4-hydroxy-tetrahydrodipicolinate reductase (274 aa).

NAD(+) contacts are provided by residues 11 to 16 (GGSGRM) and E37. R38 lines the NADP(+) pocket. NAD(+) contacts are provided by residues 101-103 (GTT) and 125-128 (APNM). H158 serves as the catalytic Proton donor/acceptor. Residue H159 coordinates (S)-2,3,4,5-tetrahydrodipicolinate. K162 (proton donor) is an active-site residue. 168–169 (GT) contributes to the (S)-2,3,4,5-tetrahydrodipicolinate binding site.

It belongs to the DapB family.

It is found in the cytoplasm. It catalyses the reaction (S)-2,3,4,5-tetrahydrodipicolinate + NAD(+) + H2O = (2S,4S)-4-hydroxy-2,3,4,5-tetrahydrodipicolinate + NADH + H(+). The enzyme catalyses (S)-2,3,4,5-tetrahydrodipicolinate + NADP(+) + H2O = (2S,4S)-4-hydroxy-2,3,4,5-tetrahydrodipicolinate + NADPH + H(+). Its pathway is amino-acid biosynthesis; L-lysine biosynthesis via DAP pathway; (S)-tetrahydrodipicolinate from L-aspartate: step 4/4. In terms of biological role, catalyzes the conversion of 4-hydroxy-tetrahydrodipicolinate (HTPA) to tetrahydrodipicolinate. The polypeptide is 4-hydroxy-tetrahydrodipicolinate reductase (Shewanella pealeana (strain ATCC 700345 / ANG-SQ1)).